Reading from the N-terminus, the 962-residue chain is Glycine dehydrogenase (decarboxylating) (962 aa).

Lys-709 is modified (N6-(pyridoxal phosphate)lysine).

This sequence belongs to the GcvP family. The glycine cleavage system is composed of four proteins: P, T, L and H. The cofactor is pyridoxal 5'-phosphate.

The catalysed reaction is N(6)-[(R)-lipoyl]-L-lysyl-[glycine-cleavage complex H protein] + glycine + H(+) = N(6)-[(R)-S(8)-aminomethyldihydrolipoyl]-L-lysyl-[glycine-cleavage complex H protein] + CO2. Its function is as follows. The glycine cleavage system catalyzes the degradation of glycine. The P protein binds the alpha-amino group of glycine through its pyridoxal phosphate cofactor; CO(2) is released and the remaining methylamine moiety is then transferred to the lipoamide cofactor of the H protein. The sequence is that of Glycine dehydrogenase (decarboxylating) from Shewanella oneidensis (strain ATCC 700550 / JCM 31522 / CIP 106686 / LMG 19005 / NCIMB 14063 / MR-1).